A 1153-amino-acid polypeptide reads, in one-letter code: Duffy receptor beta form (1153 aa).

The signal sequence occupies residues 1-21 (MEGKKKRPLFFLLVLLLSHKA). Topologically, residues 22–1085 (NNVLFERMKG…YECFTKGSST (1064 aa)) are extracellular. Residues N134, N179, and N202 are each glycosylated (N-linked (GlcNAc...) asparagine). Cystine bridges form between C214–C243 and C227–C234. N-linked (GlcNAc...) asparagine glycosylation is found at N252 and N348. 4 disulfide bridges follow: C297-C374, C412-C429, C424-C504, and C433-C502. N-linked (GlcNAc...) asparagine glycans are attached at residues N430 and N467. 4 disordered regions span residues 520–545 (LKSA…GAEK), 565–591 (DEAA…DNIE), 612–631 (RGAT…SYSG), and 655–981 (ENSE…LYSH). Polar residues-rich tracts occupy residues 531–542 (SHSTIQPMSSSG) and 574–586 (NGNQ…NIKG). Residues N576 and N626 are each glycosylated (N-linked (GlcNAc...) asparagine). A compositionally biased stretch (basic and acidic residues) spans 661–675 (LETKHKIFEPSKDNS). Positions 677-733 (NSENSGSMEFKATSSNPITEAVESSSAEGQVQEDSAHRSVNTGRDNSTISAATSDDG) are enriched in polar residues. A glycan (N-linked (GlcNAc...) asparagine) is linked at N722. The segment covering 791-800 (IDGKNVDIAE) has biased composition (basic and acidic residues). Over residues 819–834 (TDNGNVPRSGNKQNEG) the composition is skewed to polar residues. 2 N-linked (GlcNAc...) asparagine glycosylation sites follow: N847 and N856. Over residues 867–878 (GNEKDFQKHDFM) the composition is skewed to basic and acidic residues. Over residues 884–942 (NDQTSSDQTSSDQTSSNQTSSDQTSSNQTSSDQTSSDQISSDQTSSDQTSSNQTSSDQT) the composition is skewed to low complexity. 3 N-linked (GlcNAc...) asparagine glycosylation sites follow: N900, N910, and N935. Basic and acidic residues predominate over residues 945 to 969 (TEEHHRDNVRNPEIKSSEDMSKGDF). Over residues 971 to 981 (RNSNSNELYSH) the composition is skewed to polar residues. Residues 1086–1106 (GIGIVYFATGGAFLIILLLFV) traverse the membrane as a helical segment. The Cytoplasmic portion of the chain corresponds to 1107–1153 (SKNVASNDYEEEATFDEFVEYSDDIHRTPLMPNHIEHMQQFTPLDYS).

Its subcellular location is the membrane. Functionally, binds to Neu5Gc-sialylated receptors on macaque erythrocytes. The sequence is that of Duffy receptor beta form from Plasmodium knowlesi.